Reading from the N-terminus, the 128-residue chain is Small ribosomal subunit protein uS9c (128 aa).

A disordered region spans residues 106–128 (SRIKERKKYGLKKARKAPQFSKR). The segment covering 109–128 (KERKKYGLKKARKAPQFSKR) has biased composition (basic residues).

It belongs to the universal ribosomal protein uS9 family.

It localises to the plastid. Its subcellular location is the chloroplast. This is Small ribosomal subunit protein uS9c (rps9) from Cyanidium caldarium (Red alga).